The primary structure comprises 505 residues: Deoxyguanosinetriphosphate triphosphohydrolase (505 aa).

The HD domain maps to 66–273 (RLTHSMEVQQ…MEAADDISYC (208 aa)).

This sequence belongs to the dGTPase family. Type 1 subfamily. As to quaternary structure, homotetramer. Mg(2+) is required as a cofactor.

It carries out the reaction dGTP + H2O = 2'-deoxyguanosine + triphosphate + H(+). DGTPase preferentially hydrolyzes dGTP over the other canonical NTPs. The chain is Deoxyguanosinetriphosphate triphosphohydrolase from Escherichia coli O81 (strain ED1a).